Consider the following 488-residue polypeptide: 3-octaprenyl-4-hydroxybenzoate carboxy-lyase (488 aa).

A Mn(2+)-binding site is contributed by N172. Residues I175–R177, R189–L191, and R194–G195 each bind prenylated FMN. E238 lines the Mn(2+) pocket. The active-site Proton donor is the D287.

It belongs to the UbiD family. In terms of assembly, homohexamer. Requires prenylated FMN as cofactor. Mn(2+) serves as cofactor.

The protein localises to the cell membrane. The catalysed reaction is a 4-hydroxy-3-(all-trans-polyprenyl)benzoate + H(+) = a 2-(all-trans-polyprenyl)phenol + CO2. It participates in cofactor biosynthesis; ubiquinone biosynthesis. Catalyzes the decarboxylation of 3-octaprenyl-4-hydroxy benzoate to 2-octaprenylphenol, an intermediate step in ubiquinone biosynthesis. The polypeptide is 3-octaprenyl-4-hydroxybenzoate carboxy-lyase (Pseudomonas syringae pv. tomato (strain ATCC BAA-871 / DC3000)).